The primary structure comprises 782 residues: Transcription factor SOX-30 (782 aa).

3 disordered regions span residues 1 to 37 (MERA…AQPV), 95 to 117 (LPPG…AAAA), and 139 to 226 (PPQS…DALK). 2 stretches are compositionally biased toward pro residues: residues 7–35 (EPPP…PPAQ) and 97–106 (PGGPGVPPAP). Residues 203-226 (LDGRRSDEKKAKLEAEEAPRDALK) show a composition bias toward basic and acidic residues. A DNA-binding region (HMG box) is located at residues 366-434 (VKRPMNAFMV…KHREEFPGWV (69 aa)). Disordered regions lie at residues 501-604 (PTPA…STCP), 704-724 (YPDE…DGPP), and 756-782 (ASAP…LRNL). Over residues 512 to 522 (TLFQPSVSSTG) the composition is skewed to polar residues. A compositionally biased stretch (pro residues) spans 525 to 538 (AVPPPSLTPRPSLP). Over residues 555–574 (SGSSRSVKRSTPGSLESTTR) the composition is skewed to polar residues. Residues 704–718 (YPDEHTHSEDSRSCE) show a composition bias toward basic and acidic residues.

Interacts with CTNNB1, competitively inhibiting CTNNB1-TCF7L2/TCF4 interaction. In terms of tissue distribution, expressed in the lung (at protein level). Expressed in testes (at protein level). Expressed in preleptotene spermatocytes, round spermatids, and elongated spermatids in the testis (at protein level). Expressed in pachytene spermatocytes during stages 3 to 8 of spermatogenesis (at protein level). Increased expression in diplotene spermatocytes at stage 9-11 and in metaphase spermatocytes or secondary spermatocytes at stage 12. Expressed in ovaries.

Its subcellular location is the nucleus. It is found in the cytoplasm. Functionally, acts both as a transcriptional activator and a repressor. Binds to the DNA sequence 5'-ACAAT-3' and shows a preference for guanine residues surrounding this core motif. Binds to its own promoter and activates its own transcription. Required to activate the expression of postmeiotic genes involved in spermiogenesis. Binds to the promoter region of CTNNB1 and represses its transcription which leads to inhibition of Wnt signaling. Also inhibits Wnt signaling by binding to the CTNNB1 protein, preventing interaction of CTNNB1 with TCF7L2/TCF4. In Mus musculus (Mouse), this protein is Transcription factor SOX-30 (Sox30).